The following is a 460-amino-acid chain: Spermatogenesis-defective protein 39 homolog (460 aa).

Thr-21 carries the post-translational modification Phosphothreonine. A disordered region spans residues 70-101 (SIKETAGSSGSTSEGREQMKGRNSFYTQLPKP). Positions 73 to 82 (ETAGSSGSTS) are enriched in low complexity. Thr-115 carries the post-translational modification Phosphothreonine. 3 positions are modified to phosphoserine: Ser-119, Ser-122, and Ser-128. The span at 121–133 (QSLSDALSDTPAK) shows a compositional bias: polar residues. The disordered stretch occupies residues 121–141 (QSLSDALSDTPAKTYSPELGR). Phosphothreonine is present on Thr-130.

This sequence belongs to the SPE39 family. Interacts with VPS33B. Associates with the homotypic fusion and vacuole protein sorting (HOPS) complex; impaired by VPS33B. Interacts with RAB11A.

It localises to the cytoplasm. The protein resides in the cytoplasmic vesicle. It is found in the early endosome. The protein localises to the recycling endosome. Its subcellular location is the late endosome. Proposed to be involved in endosomal maturation implicating in part VPS33B. In epithelial cells, the VPS33B:VIPAS39 complex may play a role in the apical RAB11A-dependent recycling pathway and in the maintenance of the apical-basolateral polarity. May play a role in lysosomal trafficking, probably via association with the core HOPS complex in a discrete population of endosomes; the functions seems to be independent of VPS33B. May play a role in vesicular trafficking during spermatogenesis. May be involved in direct or indirect transcriptional regulation of E-cadherin. This is Spermatogenesis-defective protein 39 homolog (Vipas39) from Rattus norvegicus (Rat).